Here is a 416-residue protein sequence, read N- to C-terminus: Protein PBN1 (416 aa).

Residues 1–385 (MVTRHRVTVL…PDTKDYSKIK (385 aa)) are Lumenal-facing. N-linked (GlcNAc...) asparagine glycans are attached at residues Asn24, Asn85, Asn120, Asn212, and Asn365. Residues 386 to 405 (NGTLLCLLISIIYIFSKVFG) traverse the membrane as a helical; Signal-anchor for type III membrane protein segment. Topologically, residues 406-416 (NNKKKRSVKRE) are cytoplasmic.

It belongs to the PIGX family. Post-translationally, N-glycosylated.

The protein localises to the endoplasmic reticulum membrane. It functions in the pathway glycolipid biosynthesis; glycosylphosphatidylinositol-anchor biosynthesis. Required for proper folding and/or the stability of a subset of proteins in the endoplasmic reticulum. Aids the autocatalytic processing of PRB1. Component of glycosylphosphatidylinositol-mannosyltransferase 1 which transfers the first of the 4 mannoses in the GPI-anchor precursors during GPI-anchor biosynthesis. Probably acts by stabilizing the mannosyltransferase GPI14. The polypeptide is Protein PBN1 (PBN1) (Saccharomyces cerevisiae (strain ATCC 204508 / S288c) (Baker's yeast)).